Here is a 134-residue protein sequence, read N- to C-terminus: Profilin (134 aa).

The protein belongs to the profilin family. Occurs in many kinds of cells as a complex with monomeric actin in a 1:1 ratio.

It is found in the cytoplasm. The protein localises to the cytoskeleton. In terms of biological role, binds to actin and affects the structure of the cytoskeleton. At high concentrations, profilin prevents the polymerization of actin, whereas it enhances it at low concentrations. By binding to PIP2, it inhibits the formation of IP3 and DG. In Apium graveolens (Celery), this protein is Profilin.